Consider the following 415-residue polypeptide: Hydroxysteroid dehydrogenase-like protein 2 (415 aa).

NADP(+)-binding positions include 17 to 23 (GASRGIG), Lys42, and Asp74. Tyr168 (proton acceptor) is an active-site residue. Lys172 is an NADP(+) binding site. The SCP2 domain occupies 304 to 412 (AGPVSEMFNT…KLEKMMAMMK (109 aa)).

Belongs to the short-chain dehydrogenases/reductases (SDR) family.

The protein resides in the peroxisome. Its subcellular location is the mitochondrion. Functionally, has apparently no steroid dehydrogenase activity. Might act as a metabolic regulator that affects systemic adaptation to nutritional cues. This Danio rerio (Zebrafish) protein is Hydroxysteroid dehydrogenase-like protein 2 (hsdl2).